We begin with the raw amino-acid sequence, 447 residues long: Elongation factor 1-alpha (447 aa).

The tr-type G domain occupies 5–230 (KIHISIVVIG…DQINEPKRPS (226 aa)). The interval 14–21 (GHVDSGKS) is G1. Residue 14–21 (GHVDSGKS) participates in GTP binding. N6,N6-dimethyllysine is present on Lys-55. The interval 70–74 (GITID) is G2. Lys-79 bears the N6,N6,N6-trimethyllysine mark. The tract at residues 91 to 94 (DAPG) is G3. GTP is bound by residues 91 to 95 (DAPGH) and 153 to 156 (NKMD). The G4 stretch occupies residues 153–156 (NKMD). Residue Lys-187 is modified to N6,N6,N6-trimethyllysine. The interval 194–196 (SGF) is G5. Lys-261 is modified (N6-methyllysine). Position 289 is a 5-glutamyl glycerylphosphorylethanolamine (Glu-289). The residue at position 306 (Lys-306) is an N6,N6,N6-trimethyllysine. Glu-362 carries the post-translational modification 5-glutamyl glycerylphosphorylethanolamine. Residue Lys-396 is modified to N6,N6,N6-trimethyllysine.

This sequence belongs to the TRAFAC class translation factor GTPase superfamily. Classic translation factor GTPase family. EF-Tu/EF-1A subfamily.

Its subcellular location is the cytoplasm. This protein promotes the GTP-dependent binding of aminoacyl-tRNA to the A-site of ribosomes during protein biosynthesis. The polypeptide is Elongation factor 1-alpha (BLT63) (Hordeum vulgare (Barley)).